The primary structure comprises 151 residues: Extracellular globin-4 (151 aa).

The Globin domain maps to 6–151 (CCSYEDRREI…LVARIAKDLP (146 aa)). Cysteines 7 and 138 form a disulfide. H101 contributes to the heme b binding site.

Belongs to the globin family. The extracellular hemoglobin of the earthworm consists of 12 subunits that have a hexagonal bilayer structure with a molecular weight near 3.8 million. Each one-twelfth subunit is composed primarily of disulfide linked trimers (chains A, B, and C) and monomers (chain D).

It is found in the secreted. The polypeptide is Extracellular globin-4 (Lumbricus terrestris (Common earthworm)).